Consider the following 289-residue polypeptide: Formamidopyrimidine-DNA glycosylase (289 aa).

Proline 2 functions as the Schiff-base intermediate with DNA in the catalytic mechanism. Glutamate 3 (proton donor) is an active-site residue. The active-site Proton donor; for beta-elimination activity is lysine 61. Residues histidine 97, arginine 119, and lysine 168 each coordinate DNA. The segment at 254-288 (NAYGRAGKPCPRCGEPIVRVQWTNRSSHFCPQCQS) adopts an FPG-type zinc-finger fold. Arginine 278 (proton donor; for delta-elimination activity) is an active-site residue.

This sequence belongs to the FPG family. Monomer. The cofactor is Zn(2+).

The enzyme catalyses Hydrolysis of DNA containing ring-opened 7-methylguanine residues, releasing 2,6-diamino-4-hydroxy-5-(N-methyl)formamidopyrimidine.. It carries out the reaction 2'-deoxyribonucleotide-(2'-deoxyribose 5'-phosphate)-2'-deoxyribonucleotide-DNA = a 3'-end 2'-deoxyribonucleotide-(2,3-dehydro-2,3-deoxyribose 5'-phosphate)-DNA + a 5'-end 5'-phospho-2'-deoxyribonucleoside-DNA + H(+). Involved in base excision repair of DNA damaged by oxidation or by mutagenic agents. Acts as a DNA glycosylase that recognizes and removes damaged bases. Has a preference for oxidized purines, such as 7,8-dihydro-8-oxoguanine (8-oxoG). Has AP (apurinic/apyrimidinic) lyase activity and introduces nicks in the DNA strand. Cleaves the DNA backbone by beta-delta elimination to generate a single-strand break at the site of the removed base with both 3'- and 5'-phosphates. This Corynebacterium urealyticum (strain ATCC 43042 / DSM 7109) protein is Formamidopyrimidine-DNA glycosylase.